A 288-amino-acid chain; its full sequence is Cyclin-dependent kinase 2 homolog (288 aa).

Residues 4–284 (YHGLEKIGEG…AKEALQHAYF (281 aa)) form the Protein kinase domain. ATP contacts are provided by residues 10–18 (IGEGTYGVV) and K32. Phosphothreonine is present on T14. The residue at position 15 (Y15) is a Phosphotyrosine. D125 (proton acceptor) is an active-site residue. At T158 the chain carries Phosphothreonine.

Belongs to the protein kinase superfamily. CMGC Ser/Thr protein kinase family. CDC2/CDKX subfamily. As to quaternary structure, may form a complex composed of at least the catalytic subunit CRK2 and a cyclin. It depends on Mg(2+) as a cofactor.

Its subcellular location is the cytoplasm. It carries out the reaction L-seryl-[protein] + ATP = O-phospho-L-seryl-[protein] + ADP + H(+). It catalyses the reaction L-threonyl-[protein] + ATP = O-phospho-L-threonyl-[protein] + ADP + H(+). The enzyme catalyses [DNA-directed RNA polymerase] + ATP = phospho-[DNA-directed RNA polymerase] + ADP + H(+). With respect to regulation, phosphorylation at Thr-14 or Tyr-15 inactivates the enzyme, while phosphorylation at Thr-158 activates it. In terms of biological role, serine/threonine-protein kinase. Involved in the control of the cell cycle. Required for entry into S-phase and mitosis. Probable component of the kinase complex that phosphorylates the repetitive C-terminus of RNA polymerase II. This is Cyclin-dependent kinase 2 homolog from Plasmodium knowlesi (strain H).